The chain runs to 152 residues: D-aminoacyl-tRNA deacylase (152 aa).

The Gly-cisPro motif, important for rejection of L-amino acids motif lies at 142–143 (GP).

This sequence belongs to the DTD family. As to quaternary structure, homodimer.

The protein localises to the cytoplasm. The enzyme catalyses glycyl-tRNA(Ala) + H2O = tRNA(Ala) + glycine + H(+). It catalyses the reaction a D-aminoacyl-tRNA + H2O = a tRNA + a D-alpha-amino acid + H(+). Functionally, an aminoacyl-tRNA editing enzyme that deacylates mischarged D-aminoacyl-tRNAs. Also deacylates mischarged glycyl-tRNA(Ala), protecting cells against glycine mischarging by AlaRS. Acts via tRNA-based rather than protein-based catalysis; rejects L-amino acids rather than detecting D-amino acids in the active site. By recycling D-aminoacyl-tRNA to D-amino acids and free tRNA molecules, this enzyme counteracts the toxicity associated with the formation of D-aminoacyl-tRNA entities in vivo and helps enforce protein L-homochirality. In Paraburkholderia phytofirmans (strain DSM 17436 / LMG 22146 / PsJN) (Burkholderia phytofirmans), this protein is D-aminoacyl-tRNA deacylase.